The chain runs to 431 residues: Phosphomethylpyrimidine synthase (431 aa).

Substrate-binding positions include Asn66, Met95, Tyr124, His163, 185 to 187 (SRG), 226 to 229 (DGLR), and Glu265. His269 serves as a coordination point for Zn(2+). Tyr292 is a binding site for substrate. His333 is a Zn(2+) binding site. [4Fe-4S] cluster is bound by residues Cys408, Cys411, and Cys415.

The protein belongs to the ThiC family. The cofactor is [4Fe-4S] cluster.

The catalysed reaction is 5-amino-1-(5-phospho-beta-D-ribosyl)imidazole + S-adenosyl-L-methionine = 4-amino-2-methyl-5-(phosphooxymethyl)pyrimidine + CO + 5'-deoxyadenosine + formate + L-methionine + 3 H(+). It functions in the pathway cofactor biosynthesis; thiamine diphosphate biosynthesis. Functionally, catalyzes the synthesis of the hydroxymethylpyrimidine phosphate (HMP-P) moiety of thiamine from aminoimidazole ribotide (AIR) in a radical S-adenosyl-L-methionine (SAM)-dependent reaction. The chain is Phosphomethylpyrimidine synthase from Dehalococcoides mccartyi (strain ATCC BAA-2100 / JCM 16839 / KCTC 5957 / BAV1).